The primary structure comprises 146 residues: Small ribosomal subunit protein uS9 (146 aa).

It belongs to the universal ribosomal protein uS9 family. Component of the small ribosomal subunit.

It localises to the cytoplasm. In terms of biological role, component of the small ribosomal subunit. The ribosome is a large ribonucleoprotein complex responsible for the synthesis of proteins in the cell. The polypeptide is Small ribosomal subunit protein uS9 (rps16) (Ictalurus punctatus (Channel catfish)).